We begin with the raw amino-acid sequence, 282 residues long: Pantothenate synthetase (282 aa).

30–37 (MGALHAGH) provides a ligand contact to ATP. The active-site Proton donor is His37. Gln61 is a (R)-pantoate binding site. Gln61 contributes to the beta-alanine binding site. Residue 147 to 150 (GEKD) coordinates ATP. Gln153 contacts (R)-pantoate. Residues Val176 and 184 to 187 (LSSR) each bind ATP.

It belongs to the pantothenate synthetase family. In terms of assembly, homodimer.

It is found in the cytoplasm. The enzyme catalyses (R)-pantoate + beta-alanine + ATP = (R)-pantothenate + AMP + diphosphate + H(+). It functions in the pathway cofactor biosynthesis; (R)-pantothenate biosynthesis; (R)-pantothenate from (R)-pantoate and beta-alanine: step 1/1. Catalyzes the condensation of pantoate with beta-alanine in an ATP-dependent reaction via a pantoyl-adenylate intermediate. The polypeptide is Pantothenate synthetase (Bacteroides fragilis (strain ATCC 25285 / DSM 2151 / CCUG 4856 / JCM 11019 / LMG 10263 / NCTC 9343 / Onslow / VPI 2553 / EN-2)).